Consider the following 237-residue polypeptide: Uracil-DNA glycosylase (237 aa).

Asp-77 serves as the catalytic Proton acceptor.

Belongs to the uracil-DNA glycosylase (UDG) superfamily. UNG family.

The protein localises to the cytoplasm. The enzyme catalyses Hydrolyzes single-stranded DNA or mismatched double-stranded DNA and polynucleotides, releasing free uracil.. Functionally, excises uracil residues from the DNA which can arise as a result of misincorporation of dUMP residues by DNA polymerase or due to deamination of cytosine. This chain is Uracil-DNA glycosylase, found in Acinetobacter baumannii (strain SDF).